The chain runs to 64 residues: Translation machinery-associated protein 7 homolog (64 aa).

The segment at 1-64 is disordered; the sequence is MSGREGGKKK…GGGIKKSGKK (64 aa). Over residues 27 to 38 the composition is skewed to basic and acidic residues; it reads MAFKQKQKEQQK. The stretch at 27–50 forms a coiled coil; that stretch reads MAFKQKQKEQQKALEAAKANASKK. Residues 39-50 show a composition bias toward low complexity; sequence ALEAAKANASKK. Residues 53 to 64 show a composition bias toward gly residues; sequence LVGGGIKKSGKK.

This is Translation machinery-associated protein 7 homolog from Drosophila melanogaster (Fruit fly).